The primary structure comprises 395 residues: Immediate-early protein ICP-46 (395 aa).

This sequence belongs to the IIV-6 393L family.

This chain is Immediate-early protein ICP-46 (ICR489), found in Dryophytes versicolor (chameleon treefrog).